The sequence spans 879 residues: MNEQYSAMRSNVSMLGTLLGDTIKEALGENILDKVETIRKLSKSSRAGNEKHRQELLTTLQNLSNDELLPVARAFSQFLNLTNTAEQYHTISPHGEAASNPAQLSSAFKRLKESKDLSERDIRDAVESLSIELVLTAHPTEITRRTLIHKLVEVNTCLKQLDHNDLADYERNQVMRRLRQLIAQSWHTDEIRKIRPTPVDEAKWGFAVVENSLWEGVPAFLRELDEQLEQAFGYRLPVDAVPVRFTSWMGGDRDGNPNVTAEVTRHVLLLSRWKAADLFLRDIQVLVSELSMSECTPELLELAGGSEVQEPYRAIMKSLRSQLSCTLSYLEARLTGEERLPPKDLLITNEQLWEPLHACYQSLKTCGMGIIADGSLLDTLRRVRCFGVPLVRIDVRQESTRHTDALAEITRYLGLGDYESWSESDKQAFLIRELSSKRPLLPRYWEPSADTKEVLDTCRVIAKAPQGSIAAYVISMARTPSDVLAVQLLLKEAGCPFALPVAPLFETLDDLNNADDVMTQLLSIDWYRGFIQGKQMVMIGYSDSAKDAGVMAASWAQYRAQDALIKTCEKAGIALTLFHGRGGSIGRGGAPAHAALLSQPPGSLKGGLRVTEQGEMIRFKYGLPDVTISSLALYTGAILEANLLPPPEPKQEWHEVMDELSRVSCDMYRGYVRENPDFVPYFRAATPELELGKLPLGSRPAKRRPNGGVESLRAIPWIFAWTQNRLMLPAWLGAGAGLQKVVDDGKQEQLEEMCRNWPFFSTRIGMLEMVFAKADLWLAEYYDQRLVEEKLWPLGKQLRDQLAADINIVLAISNDDHLMADLPWIAESIALRNVYTDPLNVLQAELLHRSRQQKQPDADLELALMVTIAGVAAGMRNTG.

Active-site residues include His138 and Lys546.

The protein belongs to the PEPCase type 1 family. Requires Mg(2+) as cofactor.

The enzyme catalyses oxaloacetate + phosphate = phosphoenolpyruvate + hydrogencarbonate. Its function is as follows. Forms oxaloacetate, a four-carbon dicarboxylic acid source for the tricarboxylic acid cycle. The sequence is that of Phosphoenolpyruvate carboxylase from Pectobacterium atrosepticum (strain SCRI 1043 / ATCC BAA-672) (Erwinia carotovora subsp. atroseptica).